An 86-amino-acid chain; its full sequence is MNLSHKTMFMTLYIVFLLIFGSYNATARIGPIKLSETEIVQTRSRQEIIGGFTFKGRVFHSFSKRVLVPPSGPSMRHNSVVNNLKH.

The first 27 residues, 1-27 (MNLSHKTMFMTLYIVFLLIFGSYNATA), serve as a signal peptide directing secretion.

As to expression, expressed in roots.

The protein resides in the secreted. It localises to the extracellular space. Functionally, involved in an ethylene-independent separation step of floral abscission. May act with RLK5 and HSL2 as ligand-receptor pairs. The chain is Protein IDA-LIKE 1 (IDL1) from Arabidopsis thaliana (Mouse-ear cress).